A 230-amino-acid polypeptide reads, in one-letter code: 7-cyano-7-deazaguanine synthase (230 aa).

10-20 (LSGGLDSATTA) contributes to the ATP binding site. 4 residues coordinate Zn(2+): Cys-191, Cys-199, Cys-202, and Cys-205.

This sequence belongs to the QueC family. The cofactor is Zn(2+).

It carries out the reaction 7-carboxy-7-deazaguanine + NH4(+) + ATP = 7-cyano-7-deazaguanine + ADP + phosphate + H2O + H(+). It participates in purine metabolism; 7-cyano-7-deazaguanine biosynthesis. Functionally, catalyzes the ATP-dependent conversion of 7-carboxy-7-deazaguanine (CDG) to 7-cyano-7-deazaguanine (preQ(0)). This is 7-cyano-7-deazaguanine synthase from Gloeothece citriformis (strain PCC 7424) (Cyanothece sp. (strain PCC 7424)).